The following is a 249-amino-acid chain: Leucyl/phenylalanyl-tRNA--protein transferase (249 aa).

The tract at residues 1-21 (MSRTLPHLLSSDPASPFPPAE) is disordered.

Belongs to the L/F-transferase family.

The protein localises to the cytoplasm. It carries out the reaction N-terminal L-lysyl-[protein] + L-leucyl-tRNA(Leu) = N-terminal L-leucyl-L-lysyl-[protein] + tRNA(Leu) + H(+). The catalysed reaction is N-terminal L-arginyl-[protein] + L-leucyl-tRNA(Leu) = N-terminal L-leucyl-L-arginyl-[protein] + tRNA(Leu) + H(+). The enzyme catalyses L-phenylalanyl-tRNA(Phe) + an N-terminal L-alpha-aminoacyl-[protein] = an N-terminal L-phenylalanyl-L-alpha-aminoacyl-[protein] + tRNA(Phe). Its function is as follows. Functions in the N-end rule pathway of protein degradation where it conjugates Leu, Phe and, less efficiently, Met from aminoacyl-tRNAs to the N-termini of proteins containing an N-terminal arginine or lysine. In Xanthomonas campestris pv. campestris (strain 8004), this protein is Leucyl/phenylalanyl-tRNA--protein transferase.